The sequence spans 1381 residues: DNA-directed RNA polymerase subunit beta'' (1381 aa).

Zn(2+) contacts are provided by Cys220, Cys293, Cys300, and Cys303.

The protein belongs to the RNA polymerase beta' chain family. RpoC2 subfamily. In terms of assembly, in plastids the minimal PEP RNA polymerase catalytic core is composed of four subunits: alpha, beta, beta', and beta''. When a (nuclear-encoded) sigma factor is associated with the core the holoenzyme is formed, which can initiate transcription. It depends on Zn(2+) as a cofactor.

It localises to the plastid. The protein localises to the chloroplast. It carries out the reaction RNA(n) + a ribonucleoside 5'-triphosphate = RNA(n+1) + diphosphate. In terms of biological role, DNA-dependent RNA polymerase catalyzes the transcription of DNA into RNA using the four ribonucleoside triphosphates as substrates. The protein is DNA-directed RNA polymerase subunit beta'' of Draba nemorosa (Woodland whitlowgrass).